A 296-amino-acid chain; its full sequence is 4-hydroxybenzoate octaprenyltransferase (296 aa).

Helical transmembrane passes span 28 to 48 (PIGI…AGKG), 52 to 72 (LANI…GCVI), 102 to 122 (ALVF…CTNA), 146 to 166 (YYPQ…AFTA), 169 to 189 (GELP…TVGY), 219 to 239 (VIIL…GSKF), 241 to 261 (LGMW…WEFW), and 275 to 295 (FLHN…DYAL).

This sequence belongs to the UbiA prenyltransferase family. Mg(2+) is required as a cofactor.

Its subcellular location is the cell inner membrane. The catalysed reaction is all-trans-octaprenyl diphosphate + 4-hydroxybenzoate = 4-hydroxy-3-(all-trans-octaprenyl)benzoate + diphosphate. The protein operates within cofactor biosynthesis; ubiquinone biosynthesis. Catalyzes the prenylation of para-hydroxybenzoate (PHB) with an all-trans polyprenyl group. Mediates the second step in the final reaction sequence of ubiquinone-8 (UQ-8) biosynthesis, which is the condensation of the polyisoprenoid side chain with PHB, generating the first membrane-bound Q intermediate 3-octaprenyl-4-hydroxybenzoate. This chain is 4-hydroxybenzoate octaprenyltransferase, found in Pseudomonas fluorescens (strain Pf0-1).